Here is a 38-residue protein sequence, read N- to C-terminus: Photosystem II reaction center protein X (38 aa).

Residues 9–29 (IASLFAGAFIALAIGGVLVFI) form a helical membrane-spanning segment.

This sequence belongs to the PsbX family. Type 1 subfamily. In terms of assembly, PSII is composed of 1 copy each of membrane proteins PsbA, PsbB, PsbC, PsbD, PsbE, PsbF, PsbH, PsbI, PsbJ, PsbK, PsbL, PsbM, PsbT, PsbX, PsbY, PsbZ, Psb30/Ycf12, at least 3 peripheral proteins of the oxygen-evolving complex and a large number of cofactors. It forms dimeric complexes.

It localises to the plastid. The protein resides in the chloroplast thylakoid membrane. Its function is as follows. Involved in the binding and/or turnover of quinones at the Q(B) site of photosystem II (PSII). PSII is a light-driven water plastoquinone oxidoreductase, using light energy to abstract electrons from H(2)O, generating a proton gradient subsequently used for ATP formation. The protein is Photosystem II reaction center protein X of Phaeodactylum tricornutum (strain CCAP 1055/1).